Consider the following 87-residue polypeptide: Alpha-elapitoxin-Ls2a (87 aa).

An N-terminal signal peptide occupies residues 1–21; that stretch reads MKTLLLTLVVVTIVCLDLGYT. Disulfide bonds link Cys24–Cys41, Cys34–Cys62, Cys47–Cys51, Cys66–Cys77, and Cys78–Cys83.

This sequence belongs to the three-finger toxin family. Long-chain subfamily. Type II alpha-neurotoxin sub-subfamily. Expressed by the venom gland.

It localises to the secreted. Functionally, binds with high affinity to muscular (tested on Torpedo marmorata, Kd=1.6 nM) and neuronal (chimeric alpha-7/CHRNA7, Kd=3 nM) nicotinic acetylcholine receptor (nAChR) and inhibits acetylcholine from binding to the receptor, thereby impairing neuromuscular and neuronal transmission. Also shows a very weak inhibition on GABA(A) receptors. The toxin (10 uM) inhibits 83% of current in channels composed of alpha-1-beta-3-gamma-2 (GABRA1-GABRB3-GABRG2) subunits, 39% of current in channels composed of alpha-2-beta-2-gamma-2 (GABRA2-GABRB2-GABRG2) subunits, and 33% of current in channels composed of alpha-5-beta-2-gamma-2 (GABRA5-GABRB2-GABRG2) subunits. The protein is Alpha-elapitoxin-Ls2a of Laticauda semifasciata (Black-banded sea krait).